Here is a 255-residue protein sequence, read N- to C-terminus: uncharacterized protein (255 aa).

A signal peptide spans 1–18; the sequence is MRILIILSIILCSLFTKA.

The protein belongs to the MlaA family.

This is an uncharacterized protein from Rickettsia bellii (strain RML369-C).